A 358-amino-acid chain; its full sequence is 4-hydroxybenzoate polyprenyltransferase, mitochondrial (358 aa).

Residues 1–20 (MIIKPIASPARYFLRTPSWS) constitute a mitochondrion transit peptide. The next 7 membrane-spanning stretches (helical) occupy residues 76-96 (TGTY…AYAY), 107-127 (LALF…INDL), 154-174 (AISL…QLNP), 202-222 (VVLG…LAGE), 229-249 (VVAP…TIYA), 275-295 (VLCG…IMNG), and 336-356 (NTGY…SFIY).

Belongs to the UbiA prenyltransferase family. It depends on Mg(2+) as a cofactor.

It localises to the mitochondrion. The protein localises to the mitochondrion inner membrane. It catalyses the reaction an all-trans-polyprenyl diphosphate + 4-hydroxybenzoate = a 4-hydroxy-3-(all-trans-polyprenyl)benzoate + diphosphate. The protein operates within cofactor biosynthesis; ubiquinone biosynthesis. Functionally, catalyzes the prenylation of para-hydroxybenzoate (PHB) with an all-trans polyprenyl group. Mediates the second step in the final reaction sequence of coenzyme Q (CoQ) biosynthesis, which is the condensation of the polyisoprenoid side chain with PHB, generating the first membrane-bound Q intermediate. The chain is 4-hydroxybenzoate polyprenyltransferase, mitochondrial from Schizosaccharomyces pombe (strain 972 / ATCC 24843) (Fission yeast).